Here is a 317-residue protein sequence, read N- to C-terminus: Thiamine thiazole synthase (317 aa).

Residues Cys78, Glu99–Ala100, Gly107, and Val172 contribute to the substrate site. At Cys206 the chain carries 2,3-didehydroalanine (Cys). Residues Asp208, His223, Met275, and Arg285–Gly287 contribute to the substrate site.

It belongs to the THI4 family. As to quaternary structure, homooctamer. Fe cation serves as cofactor. During the catalytic reaction, a sulfide is transferred from Cys-206 to a reaction intermediate, generating a dehydroalanine residue.

It is found in the cytoplasm. The protein resides in the nucleus. The enzyme catalyses [ADP-thiazole synthase]-L-cysteine + glycine + NAD(+) = [ADP-thiazole synthase]-dehydroalanine + ADP-5-ethyl-4-methylthiazole-2-carboxylate + nicotinamide + 3 H2O + 2 H(+). In terms of biological role, involved in biosynthesis of the thiamine precursor thiazole. Catalyzes the conversion of NAD and glycine to adenosine diphosphate 5-(2-hydroxyethyl)-4-methylthiazole-2-carboxylic acid (ADT), an adenylated thiazole intermediate. The reaction includes an iron-dependent sulfide transfer from a conserved cysteine residue of the protein to a thiazole intermediate. The enzyme can only undergo a single turnover, which suggests it is a suicide enzyme. May have additional roles in adaptation to various stress conditions and in DNA damage tolerance. The protein is Thiamine thiazole synthase of Yarrowia lipolytica (strain CLIB 122 / E 150) (Yeast).